A 380-amino-acid polypeptide reads, in one-letter code: Cytoplasmic protein NCK2 (380 aa).

Thr2 carries the N-acetylthreonine modification. In terms of domain architecture, SH3 1 spans 2–61 (TEEVIVIAKWDYTAQQDQELDIKKNERLWLLDDSKTWWRVRNAANRTGYVPSNYVERKNS). A disordered region spans residues 79-102 (KTRRKTSARDASPTPSTDAEYPAN). Ser90 carries the post-translational modification Phosphoserine. Phosphothreonine is present on Thr92. Phosphoserine is present on Ser94. Residue Tyr110 is modified to Phosphotyrosine. SH3 domains lie at 111 to 170 (DLNI…EEVD) and 195 to 257 (RVLH…VLSD). The SH2 domain occupies 285-380 (WYYGNVTRHQ…EKLYLVRALQ (96 aa)).

Interacts with DOCK1, LIMS1 and TGFB1I1. Part of a complex containing PPP1R15B, PP1 and NCK2. Interacts with FASLG. Interacts with AXL. Interacts with PAK1, PKN2 and SOS1. Interacts (via SH2 domain) with EGFR. Interacts (via SH2 domain) with DDR1. Interacts with IRS1. Phosphorylated. In terms of tissue distribution, ubiquitous.

It is found in the cytoplasm. It localises to the endoplasmic reticulum. In terms of biological role, adapter protein which associates with tyrosine-phosphorylated growth factor receptors or their cellular substrates. Maintains low levels of EIF2S1 phosphorylation by promoting its dephosphorylation by PP1. Plays a role in ELK1-dependent transcriptional activation in response to activated Ras signaling. The polypeptide is Cytoplasmic protein NCK2 (NCK2) (Homo sapiens (Human)).